The primary structure comprises 367 residues: Peptide chain release factor 1 (367 aa).

N5-methylglutamine is present on Gln-238.

The protein belongs to the prokaryotic/mitochondrial release factor family. Methylated by PrmC. Methylation increases the termination efficiency of RF1.

It is found in the cytoplasm. Its function is as follows. Peptide chain release factor 1 directs the termination of translation in response to the peptide chain termination codons UAG and UAA. The sequence is that of Peptide chain release factor 1 from Dictyoglomus thermophilum (strain ATCC 35947 / DSM 3960 / H-6-12).